The chain runs to 86 residues: Mu-theraphotoxin-Hhn1b 3 (86 aa).

Positions 1–21 are cleaved as a signal peptide; sequence MKASMFLALTGLALLFVVCYA. A propeptide spanning residues 22–49 is cleaved from the precursor; the sequence is SESEEKEFSNELLSSVLAVDDNSKGEER. 3 disulfides stabilise this stretch: cysteine 51-cysteine 66, cysteine 58-cysteine 73, and cysteine 65-cysteine 80. Isoleucine 84 is subject to Isoleucine amide.

This sequence belongs to the neurotoxin 10 (Hwtx-1) family. 22 (Htx-4) subfamily. As to quaternary structure, monomer. Expressed by the venom gland.

It localises to the secreted. Neurotoxin. Selectively blocks neuronal tetrodotoxin-sensitive voltage-gated sodium channels (Nav) with an IC(50) of 44.6 nM. Does not affect tetrodotoxin-resistant voltage-gated sodium channels or calcium channels. The polypeptide is Mu-theraphotoxin-Hhn1b 3 (Cyriopagopus hainanus (Chinese bird spider)).